We begin with the raw amino-acid sequence, 1399 residues long: MKDLLNLLKNQGQVEEFDAIRIGLASPEMIRSWSFGEVKKPETINYRTFKPERDGLFCAKIFGPVKDYECLCGKYKRLKHRGVICEKCGVEVALAKVRRERMAHIELASPVAHIWFLKSLPSRIGLLMDMTLRDIERVLYFESYVVIDPGMTTLEKGQLLNDEQYFEALEEFGDDFDARMGAEAVRELLHAIDLEHEIGRLREEIPQTNSETKIKKLSKRLKLMEAFQGSGNLPEWMVLTVLPVLPPDLRPLVPLDGGRFATSDLNDLYRRVINRNNRLKRLLDLSAPDIIVRNEKRMLQEAVDALLDNGRRGRAITGSNKRPLKSLADMIKGKQGRFRQNLLGKRVDYSGRSVITVGPTLRLHQCGLPKKMALELFKPFIFGKLEMRGLATTIKAAKKMVERELPEVWDVLAEVIREHPVLLNRAPTLHRLGIQAFEPVLIEGKAIQLHPLVCAAYNADFDGDQMAVHVPLTLEAQLEARALMMSTNNILSPANGEPIIVPSQDVVLGLYYMTREAINAKGEGRVFADLQEVDRVFRAGEAALHAKIKVRINETVKDRDGSVTKNTRIVDTTVGRALLFQVVPAGLPYDVVNQPMKKKAISKLINQCYRVVGLKETVIFADQLMYTGFAYSTISGVSIGVNDFVIPDEKARIINSATDEVKEIESQYASGLVTQGEKYNKVIDLWSKANDEVSKAMMANLSKEKVIDREGKEVEQESFNSMYMMADSGARGSAAQIRQLAGMRGLMAKPDGSIIETPITANFREGLSVLQYFISTHGARKGLADTALKTANSGYLTRRLVDVAQDLVVTEIDCGTDHGLLMTPHIEGGDVVEPLGERVLGRVIARDVFKPGTEDVIVPAGTLVDEQWVEFIELNSIDEVIVRSPINCETRYGICAKCYGRDLARGHQVNIGEAVGVIAAQSIGEPGTQLTMRTFHIGGAASRTSAADSVQVKNGGMVRLHNLKQVERADGNLVAVSRSGELAIADEFGRERERYKLPYGAVISVKEGEKVEAGAIVAKWDPHTHPIVTELKGTVTFVGMEENITIKRQTDELTGLTNIEVLDVKDRPAAGKEIRPAIKMVDANGKDLYLPGTDVPAQYFLPANALVGVADGAQIGVGDVIARIPQETSKTRDITGGLPRVADLFEARRPKEASILAEVSGTIAFGKETKGKRRLVITPTDGSDPYEELIPKWRHLNVFEGEQVNRGEVISDGPSDPHDILRLLGVSALAKYIVNEIQDVYRLQGVKINDKHIETILRQMLRKVEISESGDSSFIKGDQMELTHVLVENERLAGEDKFISKFTRVLLGITKASLSTESFISAASFQETTRVLTEAAVTGKRDYLRGLKENVVVGRLIPAGTGLAYHSERKRRRDADKPLRVSASEVEAALTEALNSSGN.

Positions 70, 72, 85, and 88 each coordinate Zn(2+). Residues Asp460, Asp462, and Asp464 each coordinate Mg(2+). The Zn(2+) site is built by Cys814, Cys888, Cys895, and Cys898.

This sequence belongs to the RNA polymerase beta' chain family. The RNAP catalytic core consists of 2 alpha, 1 beta, 1 beta' and 1 omega subunit. When a sigma factor is associated with the core the holoenzyme is formed, which can initiate transcription. Mg(2+) is required as a cofactor. The cofactor is Zn(2+).

It carries out the reaction RNA(n) + a ribonucleoside 5'-triphosphate = RNA(n+1) + diphosphate. DNA-dependent RNA polymerase catalyzes the transcription of DNA into RNA using the four ribonucleoside triphosphates as substrates. The polypeptide is DNA-directed RNA polymerase subunit beta' (Pseudomonas putida (strain GB-1)).